The following is a 905-amino-acid chain: Alanine--tRNA ligase (905 aa).

Residues His-569, His-573, Cys-693, and His-697 each contribute to the Zn(2+) site.

The protein belongs to the class-II aminoacyl-tRNA synthetase family. Zn(2+) serves as cofactor.

It localises to the cytoplasm. It catalyses the reaction tRNA(Ala) + L-alanine + ATP = L-alanyl-tRNA(Ala) + AMP + diphosphate. Functionally, catalyzes the attachment of alanine to tRNA(Ala) in a two-step reaction: alanine is first activated by ATP to form Ala-AMP and then transferred to the acceptor end of tRNA(Ala). Also edits incorrectly charged Ser-tRNA(Ala) and Gly-tRNA(Ala) via its editing domain. This Roseiflexus sp. (strain RS-1) protein is Alanine--tRNA ligase.